Consider the following 370-residue polypeptide: Queuine tRNA-ribosyltransferase (370 aa).

Asp-89 acts as the Proton acceptor in catalysis. Substrate is bound by residues 89 to 93 (DSGGF), Asp-143, Gln-187, and Gly-214. Positions 245 to 251 (GVGTPED) are RNA binding. Asp-264 acts as the Nucleophile in catalysis. Residues 269 to 273 (TRNAR) are RNA binding; important for wobble base 34 recognition. The Zn(2+) site is built by Cys-302, Cys-304, Cys-307, and His-333.

Belongs to the queuine tRNA-ribosyltransferase family. As to quaternary structure, homodimer. Within each dimer, one monomer is responsible for RNA recognition and catalysis, while the other monomer binds to the replacement base PreQ1. The cofactor is Zn(2+).

The enzyme catalyses 7-aminomethyl-7-carbaguanine + guanosine(34) in tRNA = 7-aminomethyl-7-carbaguanosine(34) in tRNA + guanine. Its pathway is tRNA modification; tRNA-queuosine biosynthesis. Its function is as follows. Catalyzes the base-exchange of a guanine (G) residue with the queuine precursor 7-aminomethyl-7-deazaguanine (PreQ1) at position 34 (anticodon wobble position) in tRNAs with GU(N) anticodons (tRNA-Asp, -Asn, -His and -Tyr). Catalysis occurs through a double-displacement mechanism. The nucleophile active site attacks the C1' of nucleotide 34 to detach the guanine base from the RNA, forming a covalent enzyme-RNA intermediate. The proton acceptor active site deprotonates the incoming PreQ1, allowing a nucleophilic attack on the C1' of the ribose to form the product. After dissociation, two additional enzymatic reactions on the tRNA convert PreQ1 to queuine (Q), resulting in the hypermodified nucleoside queuosine (7-(((4,5-cis-dihydroxy-2-cyclopenten-1-yl)amino)methyl)-7-deazaguanosine). In Azoarcus sp. (strain BH72), this protein is Queuine tRNA-ribosyltransferase.